The chain runs to 474 residues: tRNA-2-methylthio-N(6)-dimethylallyladenosine synthase (474 aa).

Residues 3 to 120 (KKLHIKTWGC…LPEMIEQIQR (118 aa)) enclose the MTTase N-terminal domain. Cys12, Cys49, Cys83, Cys157, Cys161, and Cys164 together coordinate [4Fe-4S] cluster. Residues 143–375 (RADGPTAFVS…QDRITQQAMR (233 aa)) enclose the Radical SAM core domain. Residues 378–441 (RQMLGTVQRI…TNSLRGEFVR (64 aa)) enclose the TRAM domain.

It belongs to the methylthiotransferase family. MiaB subfamily. As to quaternary structure, monomer. It depends on [4Fe-4S] cluster as a cofactor.

Its subcellular location is the cytoplasm. It catalyses the reaction N(6)-dimethylallyladenosine(37) in tRNA + (sulfur carrier)-SH + AH2 + 2 S-adenosyl-L-methionine = 2-methylsulfanyl-N(6)-dimethylallyladenosine(37) in tRNA + (sulfur carrier)-H + 5'-deoxyadenosine + L-methionine + A + S-adenosyl-L-homocysteine + 2 H(+). Its function is as follows. Catalyzes the methylthiolation of N6-(dimethylallyl)adenosine (i(6)A), leading to the formation of 2-methylthio-N6-(dimethylallyl)adenosine (ms(2)i(6)A) at position 37 in tRNAs that read codons beginning with uridine. This chain is tRNA-2-methylthio-N(6)-dimethylallyladenosine synthase, found in Shewanella frigidimarina (strain NCIMB 400).